The chain runs to 186 residues: NADH dehydrogenase [ubiquinone] 1 beta subcomplex subunit 8, mitochondrial (186 aa).

Residues 1–28 (MAVARAGVLGVQWLQRASWNVMPLGART) constitute a mitochondrion transit peptide. Residues 133–153 (LFGFLAFMIFMCWVGEVYPVY) traverse the membrane as a helical segment.

Belongs to the complex I NDUFB8 subunit family. As to quaternary structure, complex I is composed of 45 different subunits.

It is found in the mitochondrion inner membrane. Functionally, accessory subunit of the mitochondrial membrane respiratory chain NADH dehydrogenase (Complex I), that is believed not to be involved in catalysis. Complex I functions in the transfer of electrons from NADH to the respiratory chain. The immediate electron acceptor for the enzyme is believed to be ubiquinone. The sequence is that of NADH dehydrogenase [ubiquinone] 1 beta subcomplex subunit 8, mitochondrial (NDUFB8) from Pongo abelii (Sumatran orangutan).